The chain runs to 198 residues: Protein FAM219B (198 aa).

Disordered regions lie at residues 1-58 (MATA…KRGP) and 83-146 (RRKG…EQVN). S14, S91, S125, and S127 each carry phosphoserine. Polar residues predominate over residues 134-146 (RYSSGYSSAEQVN).

Belongs to the FAM219 family.

The chain is Protein FAM219B (FAM219B) from Homo sapiens (Human).